A 149-amino-acid chain; its full sequence is D-aminoacyl-tRNA deacylase (149 aa).

A Gly-cisPro motif, important for rejection of L-amino acids motif is present at residues 137-138 (GP).

The protein belongs to the DTD family. Homodimer.

The protein resides in the cytoplasm. The catalysed reaction is glycyl-tRNA(Ala) + H2O = tRNA(Ala) + glycine + H(+). It carries out the reaction a D-aminoacyl-tRNA + H2O = a tRNA + a D-alpha-amino acid + H(+). Its function is as follows. An aminoacyl-tRNA editing enzyme that deacylates mischarged D-aminoacyl-tRNAs. Also deacylates mischarged glycyl-tRNA(Ala), protecting cells against glycine mischarging by AlaRS. Acts via tRNA-based rather than protein-based catalysis; rejects L-amino acids rather than detecting D-amino acids in the active site. By recycling D-aminoacyl-tRNA to D-amino acids and free tRNA molecules, this enzyme counteracts the toxicity associated with the formation of D-aminoacyl-tRNA entities in vivo and helps enforce protein L-homochirality. This chain is D-aminoacyl-tRNA deacylase, found in Alkaliphilus metalliredigens (strain QYMF).